We begin with the raw amino-acid sequence, 205 residues long: Protein phosphatase inhibitor 2 (205 aa).

The segment at 1-44 is disordered; that stretch reads MAASTASHRPIKGILKNKTSTTSSMVASAEQPRGNVDEELSKKS. Ala-2 carries the post-translational modification N-acetylalanine. Required for binding PPP1CC regions lie at residues 12 to 17 and 43 to 55; these read KGILKN and KSQK…ILAT. Residues 17–26 show a composition bias toward polar residues; sequence NKTSTTSSMV. Over residues 35–44 the composition is skewed to basic and acidic residues; the sequence is NVDEELSKKS. Ser-44 carries the phosphoserine; by ATM modification. Thr-73 is modified (phosphothreonine; by GSK3). Position 87 is a phosphoserine (Ser-87). A phosphothreonine mark is found at Thr-89 and Thr-92. The segment at 111 to 142 is disordered; the sequence is EPKYRIQEQESSGEEDSDLSPEEREKKRQFEM. Ser-121, Ser-122, Ser-127, and Ser-130 each carry phosphoserine. Residues 121 to 130 show a composition bias toward acidic residues; that stretch reads SSGEEDSDLS. Residues 131–142 show a composition bias toward basic and acidic residues; sequence PEEREKKRQFEM. Residues 147 to 150 form a required for binding PPP1CC catalytic center, displacing metal ions and inhibition of PPP1CC catalytic activity region; sequence HYNE. A disordered region spans residues 163–205; it reads KDLHDDDEDEEMLETADGESMNTEESNQGSTPSDQQQNKLRSS. Positions 167-179 are enriched in acidic residues; that stretch reads DDDEDEEMLETAD. A compositionally biased stretch (polar residues) spans 182–205; that stretch reads SMNTEESNQGSTPSDQQQNKLRSS.

It belongs to the protein phosphatase inhibitor 2 family. As to quaternary structure, heterodimer with PP1. Post-translationally, phosphorylation on Thr-73 by GSK3 activates PP1 by dissociating the PP1-PPP1R2 complex. Phosphorylation on Ser-44 by ATM activates PP1 by dissociating the PP1-PPP1R2 complex.

In terms of biological role, inhibitor of protein-phosphatase 1. The protein is Protein phosphatase inhibitor 2 (PPP1R2) of Homo sapiens (Human).